Here is a 199-residue protein sequence, read N- to C-terminus: dTTP/UTP pyrophosphatase (199 aa).

Asp-76 acts as the Proton acceptor in catalysis.

Belongs to the Maf family. YhdE subfamily. The cofactor is a divalent metal cation.

It localises to the cytoplasm. The catalysed reaction is dTTP + H2O = dTMP + diphosphate + H(+). The enzyme catalyses UTP + H2O = UMP + diphosphate + H(+). In terms of biological role, nucleoside triphosphate pyrophosphatase that hydrolyzes dTTP and UTP. May have a dual role in cell division arrest and in preventing the incorporation of modified nucleotides into cellular nucleic acids. In Chlorobaculum parvum (strain DSM 263 / NCIMB 8327) (Chlorobium vibrioforme subsp. thiosulfatophilum), this protein is dTTP/UTP pyrophosphatase.